The following is a 137-amino-acid chain: Basic phospholipase A2 homolog Bsc-K49 (137 aa).

The N-terminal stretch at 1–16 (MRTLWIVAVLLVGVEG) is a signal peptide. 7 cysteine pairs are disulfide-bonded: Cys42–Cys131, Cys44–Cys60, Cys59–Cys111, Cys65–Cys137, Cys66–Cys104, Cys73–Cys97, and Cys91–Cys102. Positions 121 to 133 (KNYKITMKMFCKK) are important for membrane-damaging activities in eukaryotes and bacteria; heparin-binding.

Belongs to the phospholipase A2 family. Group II subfamily. K49 sub-subfamily. Homodimer; non-covalently linked. Expressed by the venom gland.

The protein resides in the secreted. Functionally, snake venom phospholipase A2 that lacks enzymatic activity. Is myotoxic, and displays edema-inducing activities. A model of myotoxic mechanism has been proposed: an apo Lys49-PLA2 is activated by the entrance of a hydrophobic molecule (e.g. fatty acid) at the hydrophobic channel of the protein leading to a reorientation of a monomer. This reorientation causes a transition between 'inactive' to 'active' states, causing alignment of C-terminal and membrane-docking sites (MDoS) side-by-side and putting the membrane-disruption sites (MDiS) in the same plane, exposed to solvent and in a symmetric position for both monomers. The MDoS region stabilizes the toxin on membrane by the interaction of charged residues with phospholipid head groups. Subsequently, the MDiS region destabilizes the membrane with penetration of hydrophobic residues. This insertion causes a disorganization of the membrane, allowing an uncontrolled influx of ions (i.e. calcium and sodium), and eventually triggering irreversible intracellular alterations and cell death. This is Basic phospholipase A2 homolog Bsc-K49 from Bothriechis schlegelii (Eyelash palm pitviper).